Consider the following 1174-residue polypeptide: Lysylphosphatidylglycerol biosynthesis bifunctional protein LysX (1174 aa).

The segment at methionine 1–aspartate 665 is phosphatidylglycerol lysyltransferase. A disordered region spans residues valine 9 to arginine 36. A compositionally biased stretch (polar residues) spans valine 19–aspartate 33. 7 helical membrane-spanning segments follow: residues valine 82 to valine 102, phenylalanine 124 to alanine 144, isoleucine 148 to isoleucine 168, phenylalanine 179 to tyrosine 199, alanine 216 to phenylalanine 236, alanine 274 to serine 294, and valine 614 to serine 634. The tract at residues valine 666–histidine 1174 is lysine--tRNA ligase. A DNA-binding region (OB) is located at residues valine 728–isoleucine 806. The Mg(2+) site is built by aspartate 1086 and glutamate 1093.

In the N-terminal section; belongs to the LPG synthetase family. This sequence in the C-terminal section; belongs to the class-II aminoacyl-tRNA synthetase family. Mg(2+) is required as a cofactor.

The protein localises to the cell membrane. The catalysed reaction is tRNA(Lys) + L-lysine + ATP = L-lysyl-tRNA(Lys) + AMP + diphosphate. It carries out the reaction L-lysyl-tRNA(Lys) + a 1,2-diacyl-sn-glycero-3-phospho-(1'-sn-glycerol) = a 1,2-diacyl-sn-glycero-3-phospho-1'-(3'-O-L-lysyl)-sn-glycerol + tRNA(Lys). Its function is as follows. Catalyzes the production of L-lysyl-tRNA(Lys)transfer and the transfer of a lysyl group from L-lysyl-tRNA(Lys) to membrane-bound phosphatidylglycerol (PG), which produces lysylphosphatidylglycerol (LPG), one of the components of the bacterial membrane with a positive net charge. LPG synthesis contributes to the resistance to cationic antimicrobial peptides (CAMPs) and likely protects M.tuberculosis against the CAMPs produced by competiting microorganisms (bacteriocins). In fact, the modification of anionic phosphatidylglycerol with positively charged L-lysine results in repulsion of the peptides. The polypeptide is Lysylphosphatidylglycerol biosynthesis bifunctional protein LysX (lysX) (Mycobacterium tuberculosis (strain KZN 1435 / MDR)).